We begin with the raw amino-acid sequence, 141 residues long: MAKKGAGATRGISPVRPTRAIPIGAYLTVADNSGAKVIQVIGVVEYHGTRRRLASAGVGDMVVATVKKGRPDMRHQVVRAVIIRQRKEYRRLDGMRVKFEDNAAVIVTPEGVPRGTEIRGPVAREAAEKWVRIGSIASIIV.

This sequence belongs to the universal ribosomal protein uL14 family. Part of the 50S ribosomal subunit. Forms a cluster with proteins L3 and L24e, part of which may contact the 16S rRNA in 2 intersubunit bridges.

Functionally, binds to 23S rRNA. Forms part of two intersubunit bridges in the 70S ribosome. This Pyrococcus horikoshii (strain ATCC 700860 / DSM 12428 / JCM 9974 / NBRC 100139 / OT-3) protein is Large ribosomal subunit protein uL14.